A 145-amino-acid chain; its full sequence is MEGNLLVIDKRVLPEVFEKVINAKRLLKEGKVKEITEATKQAGISRSVYYKYKDYIFEFAETLQGRKVIFNMVVTHEKGVLSSVLNILSDVGGNILTIDQGLPIHGLAHVSFTIDISTMKCDIKEMLNEIELVHGVEKVEFVAME.

The ACT domain occupies 69 to 144 (IFNMVVTHEK…GVEKVEFVAM (76 aa)).

This sequence belongs to the UPF0735 family.

The polypeptide is UPF0735 ACT domain-containing protein CPR_1404 (Clostridium perfringens (strain SM101 / Type A)).